A 374-amino-acid polypeptide reads, in one-letter code: Probable neutral protease 2 homolog TRV_05367 (374 aa).

The first 19 residues, methionine 1–glycine 19, serve as a signal peptide directing secretion. Residues phenylalanine 20–arginine 189 constitute a propeptide that is removed on maturation. 2 cysteine pairs are disulfide-bonded: cysteine 197/cysteine 267 and cysteine 274/cysteine 292. Zn(2+) is bound at residue histidine 317. The active site involves glutamate 318. The Zn(2+) site is built by histidine 321 and aspartate 332.

The protein belongs to the peptidase M35 family. Zn(2+) serves as cofactor.

The protein resides in the secreted. The enzyme catalyses Preferential cleavage of bonds with hydrophobic residues in P1'. Also 3-Asn-|-Gln-4 and 8-Gly-|-Ser-9 bonds in insulin B chain.. Its function is as follows. Probable secreted metalloprotease that shows high activities on basic nuclear substrates such as histone and protamine. May be involved in virulence. This is Probable neutral protease 2 homolog TRV_05367 from Trichophyton verrucosum (strain HKI 0517).